The chain runs to 356 residues: Tyrosine recombinase XerS (356 aa).

Residues 16–121 enclose the Core-binding (CB) domain; it reads VMPPYVLEYY…ALSSLYKYLT (106 aa). Residues 169-354 form the Tyr recombinase domain; sequence GFLDYIDSEY…INEEQKNALD (186 aa). Residues R210, K234, H306, R309, and H332 contribute to the active site. The active-site O-(3'-phospho-DNA)-tyrosine intermediate is Y341.

Belongs to the 'phage' integrase family. XerS subfamily.

It localises to the cytoplasm. Its activity is regulated as follows. FtsK is required for recombination. Site-specific tyrosine recombinase, which acts by catalyzing the cutting and rejoining of the recombining DNA molecules. Essential to convert dimers of the bacterial chromosome into monomers to permit their segregation at cell division. The protein is Tyrosine recombinase XerS of Lactococcus lactis subsp. cremoris (strain SK11).